Consider the following 476-residue polypeptide: Aspartyl/glutamyl-tRNA(Asn/Gln) amidotransferase subunit B (476 aa).

This sequence belongs to the GatB/GatE family. GatB subfamily. Heterotrimer of A, B and C subunits.

The catalysed reaction is L-glutamyl-tRNA(Gln) + L-glutamine + ATP + H2O = L-glutaminyl-tRNA(Gln) + L-glutamate + ADP + phosphate + H(+). It catalyses the reaction L-aspartyl-tRNA(Asn) + L-glutamine + ATP + H2O = L-asparaginyl-tRNA(Asn) + L-glutamate + ADP + phosphate + 2 H(+). Allows the formation of correctly charged Asn-tRNA(Asn) or Gln-tRNA(Gln) through the transamidation of misacylated Asp-tRNA(Asn) or Glu-tRNA(Gln) in organisms which lack either or both of asparaginyl-tRNA or glutaminyl-tRNA synthetases. The reaction takes place in the presence of glutamine and ATP through an activated phospho-Asp-tRNA(Asn) or phospho-Glu-tRNA(Gln). This Clostridium botulinum (strain Alaska E43 / Type E3) protein is Aspartyl/glutamyl-tRNA(Asn/Gln) amidotransferase subunit B.